Consider the following 185-residue polypeptide: UPF0397 protein LJ_1703 (185 aa).

Transmembrane regions (helical) follow at residues 6-26, 46-66, 78-98, 113-133, and 147-167; these read GLSV…VILA, FLAL…GFIG, TWWS…LYGM, IGFN…IAPV, and FLQG…LGTI.

This sequence belongs to the UPF0397 family.

The protein resides in the cell membrane. This Lactobacillus johnsonii (strain CNCM I-12250 / La1 / NCC 533) protein is UPF0397 protein LJ_1703.